Reading from the N-terminus, the 295-residue chain is N-acetylmuramic acid 6-phosphate etherase (295 aa).

Residues 54-217 form the SIS domain; it reads VIASFRQGGR…STASMIGIGK (164 aa). Glutamate 82 (proton donor) is an active-site residue. Residue glutamate 113 is part of the active site.

Belongs to the GCKR-like family. MurNAc-6-P etherase subfamily. Homodimer.

The enzyme catalyses N-acetyl-D-muramate 6-phosphate + H2O = N-acetyl-D-glucosamine 6-phosphate + (R)-lactate. It participates in amino-sugar metabolism; N-acetylmuramate degradation. Its function is as follows. Specifically catalyzes the cleavage of the D-lactyl ether substituent of MurNAc 6-phosphate, producing GlcNAc 6-phosphate and D-lactate. The sequence is that of N-acetylmuramic acid 6-phosphate etherase from Geobacillus sp. (strain WCH70).